A 1854-amino-acid polypeptide reads, in one-letter code: Calcium-channel protein cch1 (1854 aa).

Positions 1–15 (MSSSSNSDPSSSPDN) are enriched in low complexity. The tract at residues 1 to 33 (MSSSSNSDPSSSPDNTDFIPLKDNPKDTSSYIN) is disordered. The N-linked (GlcNAc...) asparagine glycan is linked to Asn40. 3 helical membrane-spanning segments follow: residues 184-204 (HPLY…LLMI), 220-240 (IIVI…LFGF), and 274-294 (DFVA…QGIF). The N-linked (GlcNAc...) asparagine glycan is linked to Asn310. Transmembrane regions (helical) follow at residues 328 to 348 (PLVQ…ILGV), 427 to 447 (FFNS…TDIM), 461 to 481 (LFII…IAVV), 514 to 534 (YLFY…VTLC), 549 to 569 (LIFY…RFFA), 581 to 601 (YTNL…LPSI), 606 to 626 (VAFG…ILLI), and 642 to 662 (QLLN…LCAV). The N-linked (GlcNAc...) asparagine glycan is linked to Asn699. A helical membrane pass occupies residues 723-743 (FFTLWFLFSNNVVLSMFIAVI). The N-linked (GlcNAc...) asparagine glycan is linked to Asn786. Helical transmembrane passes span 946-966 (VFIY…TPIY), 980-1000 (FVWT…IKII), and 1021-1041 (FFVL…HALL). N-linked (GlcNAc...) asparagine glycosylation is present at Asn1058. 2 helical membrane-spanning segments follow: residues 1075-1095 (FFKI…FALW) and 1148-1168 (FPHA…VDIM). Asn1184 is a glycosylation site (N-linked (GlcNAc...) asparagine). The next 4 helical transmembrane spans lie at 1193-1213 (FVLF…AIII), 1274-1294 (FTGL…PCPI), 1302-1322 (SIFL…VYGL), and 1331-1351 (FWNM…IAIL). The N-linked (GlcNAc...) asparagine glycan is linked to Asn1356. 3 helical membrane-spanning segments follow: residues 1358–1378 (SLTL…IPKF), 1393–1413 (PSIF…AIAF), and 1486–1506 (FIAW…TVVF). N-linked (GlcNAc...) asparagine glycosylation is found at Asn1508 and Asn1773. The segment at 1764 to 1792 (TIASGEGDDNHSVEDHLKVPTDNEPRRSP) is disordered. The span at 1771-1790 (DDNHSVEDHLKVPTDNEPRR) shows a compositional bias: basic and acidic residues.

The protein belongs to the calcium channel alpha-1 subunit (TC 1.A.1.11) family. In terms of assembly, interacts with yam8 to form a Ca(2+) influx channel.

Its subcellular location is the cell membrane. Its function is as follows. Voltage-gated, high-affinity calcium channel that functions together with yam8 to mediate calcium entry into cells. Required during conditions of environmental stress. In Schizosaccharomyces pombe (strain 972 / ATCC 24843) (Fission yeast), this protein is Calcium-channel protein cch1 (cch1).